The following is a 541-amino-acid chain: Eukaryotic translation initiation factor 3 subunit E (541 aa).

The region spanning Val252 to Pro443 is the PCI domain. Positions Ala466–Asn541 are disordered. Residues Asn490–Asn502 show a composition bias toward gly residues. Residues Gln506–Glu522 are compositionally biased toward basic and acidic residues. The span at Ser523–Asn541 shows a compositional bias: low complexity.

It belongs to the eIF-3 subunit E family. As to quaternary structure, component of the eukaryotic translation initiation factor 3 (eIF-3) complex.

It localises to the cytoplasm. Functionally, component of the eukaryotic translation initiation factor 3 (eIF-3) complex, which is involved in protein synthesis of a specialized repertoire of mRNAs and, together with other initiation factors, stimulates binding of mRNA and methionyl-tRNAi to the 40S ribosome. The eIF-3 complex specifically targets and initiates translation of a subset of mRNAs involved in cell proliferation. This chain is Eukaryotic translation initiation factor 3 subunit E, found in Mycosarcoma maydis (Corn smut fungus).